A 439-amino-acid chain; its full sequence is Skin secretory protein xP2 (439 aa).

The signal sequence occupies residues 1–22 (MNHKLFCVHFLLLILSVCYIQG). Residues 25–351 (AGGEPAPAEG…VEVGPKTEDC (327 aa)) are disordered. A run of 5 repeats spans residues 26 to 33 (GGEPAPAE), 34 to 41 (GVAPAPAE), 42 to 51 (GGAPAPAPAE), 52 to 59 (GEAPAPAE), and 60 to 69 (GGAPAPAPAE). The segment at 26 to 343 (GGEPAPAEGV…APAPAPAPVE (318 aa)) is 33 X approximate repeats of G-G(0,1)-[EV](0,1)-A-P-[A-P](1,3)-A-E. Positions 26–345 (GGEPAPAEGV…APAPAPVEVG (320 aa)) are enriched in low complexity. The stretch at 70–77 (GAEPAPAD) is one 6; approximate repeat. 9 tandem repeats follow at residues 78–87 (GGAPAPAPAE), 88–97 (GGAPAPAPAE), 98–107 (GGAPAPAPAE), 108–115 (GGAPAPAE), 116–125 (GGAPAPAPAE), 126–135 (GEAPAPAPAE), 136–145 (GEAPAPAPAE), 146–153 (GEAPAPAE), and 154–163 (GEAPAPAPAE). One copy of the 16; approximate repeat lies at 164–173 (VEAPAPAPAE). 14 repeat units span residues 174-183 (GEAPAPAPAE), 184-193 (GEAPAPAPAE), 194-203 (GEAPAPAPAE), 204-215 (GEAPAPAPAPAE), 216-225 (GEAPAPAPAE), 226-235 (GEAPAPAPAE), 236-245 (GEAPAPAPAE), 246-255 (GEAPAPAPAE), 256-265 (GEAPAPAPAE), 266-275 (GEAPAPAPAE), 276-285 (GEAPAPAPAE), 286-293 (GEAPAPAE), 294-303 (GEAPAPAPAE), and 304-313 (GEAPAPAPAE). The 31; approximate repeat unit spans residues 314-321 (GGAPSPAE). Residues 322–331 (GGAPAAAPAE) form a 32; approximate repeat. The stretch at 332 to 343 (GGAPAPAPAPVE) is one 33; approximate repeat. P-type domains are found at residues 349–392 (EDCK…FFPR) and 396–439 (AQCL…FHQK). 6 disulfide bridges follow: C351/C377, C361/C376, C371/C388, C398/C424, C408/C423, and C418/C435.

In terms of tissue distribution, skin.

It localises to the secreted. In terms of biological role, may act as a growth factor in the germinal layer of the epidermis. May also be involved in growth of regenerating glands and in protection of the skin from the external environment. This chain is Skin secretory protein xP2 (p2), found in Xenopus laevis (African clawed frog).